Reading from the N-terminus, the 244-residue chain is Small ribosomal subunit protein uS2m (244 aa).

This sequence belongs to the universal ribosomal protein uS2 family.

The protein resides in the mitochondrion. The chain is Small ribosomal subunit protein uS2m (mrps2) from Dictyostelium discoideum (Social amoeba).